The sequence spans 573 residues: MSQTSLKHKKKNEPGMRYSKESLDAEKRKDSDKTGARLSTQGSQELPLHNTDSRGYVVRNQWSRTSRSPSTGAPSVDEPRSRNTAIKVEAPNSSTTSRTSSASPSQHETSPPPQTSEKSSIQQTPQNRPITQLESQPPTPPETEPNSRRTSAKMYTGSDPWAHRENREPRDLQLRDYAYSCDSREGMPKTREYPRTPPTEWKPYAQRRLQYGTSVDMEPEYISDGPQQRQRQQTEEDEVDEAYWTSVSMLYEKIPSCARPRPPKPKHAITIAVSSRALFNMVDDRKIYEEEGLEKYMEYQLTNENVILTPGPAFRFVKALQHVNSRLRDLYPDEQDLFDIVLMTNNHAQVGVRLINSVNHYGLLIDRFCLTGGKSPIGYLKAYLTNLYLSADSEKVQEAIKEGIASATMYAGAKDMAYCDTQLRVAFDGDAVLFSDESEHIAKDHGLDKFFQHETLFENKPLAQGPLKSFLEDLGKLQKKFYAKDERLLCPIRTYLVTARSAASSGARVLKTLRRWGLEIDEALFLAGAPKGPILVKIRPHIFFDDQMFHIESAQKFGTITAHVPYGIAQKRN.

Over residues M1 to K11 the composition is skewed to basic residues. Disordered stretches follow at residues M1–E200 and E218–E238. Positions N12–G35 are enriched in basic and acidic residues. Polar residues predominate over residues N60–A73. Over residues S93–S105 the composition is skewed to low complexity. Polar residues predominate over residues T115–Q136. Composition is skewed to basic and acidic residues over residues W161–L174 and D182–P194. D428 functions as the Nucleophile in the catalytic mechanism.

It belongs to the 5'-nucleotidase type 3 family. It depends on Mg(2+) as a cofactor. As to expression, expressed at highest levels in testis. Also expressed in brain, skeletal muscle, kidney and heart.

It is found in the cytoplasm. It catalyses the reaction a ribonucleoside 5'-phosphate + H2O = a ribonucleoside + phosphate. It carries out the reaction AMP + H2O = adenosine + phosphate. Its activity is regulated as follows. Activated by ADP. Its function is as follows. Catalyzes the hydrolysis of nucleotide monophosphates, releasing inorganic phosphate and the corresponding nucleoside, AMP is the major substrate. In Mus musculus (Mouse), this protein is Cytosolic 5'-nucleotidase 1B (Nt5c1b).